We begin with the raw amino-acid sequence, 385 residues long: Queuine tRNA-ribosyltransferase (385 aa).

Residue aspartate 92 is the Proton acceptor of the active site. Substrate-binding positions include aspartate 92 to phenylalanine 96, aspartate 146, glutamine 188, and glycine 215. Residues glycine 246–aspartate 252 form an RNA binding region. Residue aspartate 265 is the Nucleophile of the active site. Residues threonine 270–arginine 274 form an RNA binding; important for wobble base 34 recognition region. Residues cysteine 303, cysteine 305, cysteine 308, and histidine 334 each contribute to the Zn(2+) site.

This sequence belongs to the queuine tRNA-ribosyltransferase family. As to quaternary structure, homodimer. Within each dimer, one monomer is responsible for RNA recognition and catalysis, while the other monomer binds to the replacement base PreQ1. The cofactor is Zn(2+).

It catalyses the reaction 7-aminomethyl-7-carbaguanine + guanosine(34) in tRNA = 7-aminomethyl-7-carbaguanosine(34) in tRNA + guanine. Its pathway is tRNA modification; tRNA-queuosine biosynthesis. Functionally, catalyzes the base-exchange of a guanine (G) residue with the queuine precursor 7-aminomethyl-7-deazaguanine (PreQ1) at position 34 (anticodon wobble position) in tRNAs with GU(N) anticodons (tRNA-Asp, -Asn, -His and -Tyr). Catalysis occurs through a double-displacement mechanism. The nucleophile active site attacks the C1' of nucleotide 34 to detach the guanine base from the RNA, forming a covalent enzyme-RNA intermediate. The proton acceptor active site deprotonates the incoming PreQ1, allowing a nucleophilic attack on the C1' of the ribose to form the product. After dissociation, two additional enzymatic reactions on the tRNA convert PreQ1 to queuine (Q), resulting in the hypermodified nucleoside queuosine (7-(((4,5-cis-dihydroxy-2-cyclopenten-1-yl)amino)methyl)-7-deazaguanosine). The chain is Queuine tRNA-ribosyltransferase from Thermus thermophilus (strain ATCC 27634 / DSM 579 / HB8).